A 117-amino-acid polypeptide reads, in one-letter code: UPF0251 protein cbdbA217 (117 aa).

This sequence belongs to the UPF0251 family.

The sequence is that of UPF0251 protein cbdbA217 from Dehalococcoides mccartyi (strain CBDB1).